Consider the following 482-residue polypeptide: Protein DETOXIFICATION 9 (482 aa).

12 consecutive transmembrane segments (helical) span residues 32 to 49 (VASMAAPMVAVNMSQYLL), 64 to 84 (ALAGIALGSSFANVTGFGVLF), 111 to 131 (FTSIVFLLIISVPISILWMFM), 144 to 164 (IAELAGVYCLWLVPALFGYSV), 180 to 200 (PMVLSSLAALSFHVPLCWLMV), 209 to 229 (GAAASIGISYWLNAVFLWVYM), 261 to 281 (AMMCCLEWLAFEVITLLSGLL), 289 to 309 (SVISICLTTSSLHYNLVNGIG), 332 to 352 (AAAAIIIAAVESVIVSSSLFL), 374 to 394 (ITPILCISILMDSFLTVLSGI), 403 to 423 (IGAYVNITSYYVIGIPVGLLL), and 435 to 455 (WAGLVTGSTLQTLILFLVIGF).

This sequence belongs to the multi antimicrobial extrusion (MATE) (TC 2.A.66.1) family.

It is found in the membrane. The sequence is that of Protein DETOXIFICATION 9 from Arabidopsis thaliana (Mouse-ear cress).